Reading from the N-terminus, the 445-residue chain is Phenylacetate-coenzyme A ligase (445 aa).

The protein belongs to the phenylacetyl-CoA ligase family. Monomer.

It catalyses the reaction 2-phenylacetate + ATP + CoA = phenylacetyl-CoA + AMP + diphosphate. The protein operates within aromatic compound metabolism; phenylacetate degradation. Catalyzes the activation of phenylacetic acid (PA) to phenylacetyl-CoA (PA-CoA). Involved in the phenylalanine metabolism. The sequence is that of Phenylacetate-coenzyme A ligase from Thermus thermophilus (strain ATCC BAA-163 / DSM 7039 / HB27).